The chain runs to 872 residues: Armadillo repeat-containing protein 3 (872 aa).

ARM repeat units lie at residues 15 to 54 (DVFDPLMIESKKAATVVLMLNSPEEEILAKACEAIYKFAL), 57 to 96 (EENKTTLLELGAVEPLTKLLTHEDKIVRRNATMIFGILAS), 98 to 138 (NDVK…NMSA), 140 to 179 (YTSKVQIFEHGGLEPLIRLLSSPDPDVKKNSMECIYNLVQ), 181 to 220 (FQCRAKLQELNAIPPILDLLKSEYPVIQLLALKTLGVIAN), 222 to 262 (KESR…NCLE), 264 to 304 (MDTM…KAAY), 306 to 345 (PENRKLFHEQEVEKCLVALLGSENDGTKIAASQAISAMCE), 346 to 385 (NSGSKDFFNNQGIPQLIQLLKSDNEEVREAAALALANLTT), 388 to 427 (PANANAAAEADGIDPLINLLSSKRDGAIANAATVLTNMAM), 429 to 468 (EPLRLNIQNHDIMHAIISPLRSANTVVQSKAALAVTATAC), and 470 to 509 (VEARTELRNSGGLEPLVELLRSKNDEVRKHASWAVMVCAG). S-palmitoyl cysteine attachment occurs at residues cysteine 507 and cysteine 518. The segment at 610-693 (VSPPSSMEDK…SKGKKEEEKV (84 aa)) is disordered. Positions 626–635 (RSISSSSSLR) are enriched in low complexity. A compositionally biased stretch (basic residues) spans 636 to 646 (RSSKEKNKKNS). The span at 675–693 (ATKEKGWRKSKGKKEEEKV) shows a compositional bias: basic and acidic residues.

Homodimer. Interacts with PIK3C3, PIK3R4 and BECN1. Interacts (via ARM domains) with ATG14. Palmitoylation is important for its function in autophagy. Expressed in skeletal muscle, brain, lung, kidney, prostate and testis. As to expression, mainly expressed in skeletal muscle, liver, spleen and thymus. In terms of tissue distribution, expressed only in the testis among normal tissues but is expressed frequently in various cancer tissues and, particularly, in pancreatic, lung and endometrial cancers.

In terms of biological role, essential for male fertility and sperm motility. During spermatogenesis, promotes the autophagic degradation of excessive ribosomes, providing energy resources for mitochondria and thus ensuring sperm flagellar motility. The protein is Armadillo repeat-containing protein 3 (ARMC3) of Homo sapiens (Human).